The sequence spans 963 residues: Importin-13 (963 aa).

20 HEAT repeats span residues 24-54 (ENVEKALHQLYYDPNIDNKNLAQKWLMQAQV), 56-88 (PQAWHFSWQLLQPDKVPEIQYFGASALHIKISR), 95-135 (TDQY…LSMM), 142-179 (AVADMVRLFQAEDSPVDSQGRCLALLELLTVLPEEFQT), 194-231 (LAVECGTVFPLLEQLLQQPSSPSCVRQKVLKCFSSWVQ), 236-268 (LQDCEALIQAAFAALQDSELFDSSVEAIVNAIS), 276-325 (VNTL…ALLD), 330-372 (WQSF…DDIL), 375-438 (EAEK…YEML), 440-476 (AELLSNLYDKLGRLLTSSEEPYSWQHTEALLYGFQSI), 487-522 (VVPGLIGLIPRISISNVQLADTVMFTIGALSEWLAD), 524-558 (PVMINSVLPLVLHALGNPELSVSSVSTLKKICREC), 562-600 (LPPYAANIVAVSQDVLMKQIHKTSQCMWLMQALGFLLSA), 603-648 (VEEI…SNLF), 676-716 (PVVV…VKTL), 720-754 (FAPMVPQLCEMLGRMYSTVPQASALDLTRQLVHIF), 761-803 (FPPI…ALKR), 815-845 (VKAVFQCAVLALKFPEAPTVKASCGFFTELL), 860-893 (EDGRMLLIAVLEAIGGQASRSLMDCFADILFALN), and 897-931 (FSLLSMWIKEALQPPGFPSARLSPEQKDTFSQQIL). The 67-residue stretch at 45-111 (AQKWLMQAQV…KAQLFTQITR (67 aa)) folds into the Importin N-terminal domain.

Belongs to the importin beta family. Interacts with UBC9, RAN, RBM8A, eIF-1A and PAX6.

It localises to the cytoplasm. It is found in the nucleus. Functions in nuclear protein import as nuclear transport receptor. Serves as receptor for nuclear localization signals (NLS) in cargo substrates. Is thought to mediate docking of the importin/substrate complex to the nuclear pore complex (NPC) through binding to nucleoporin and the complex is subsequently translocated through the pore by an energy requiring, Ran-dependent mechanism. At the nucleoplasmic side of the NPC, Ran binds to the importin, the importin/substrate complex dissociates and importin is re-exported from the nucleus to the cytoplasm where GTP hydrolysis releases Ran. The directionality of nuclear import is thought to be conferred by an asymmetric distribution of the GTP- and GDP-bound forms of Ran between the cytoplasm and nucleus. Mediates the nuclear import of UBC9, the RBM8A/MAGOH complex, PAX6 and probably other members of the paired homeobox family. Also mediates nuclear export of eIF-1A, and the cytoplasmic release of eIF-1A is triggered by the loading of import substrates onto IPO13. This is Importin-13 (Ipo13) from Mus musculus (Mouse).